We begin with the raw amino-acid sequence, 107 residues long: uncharacterized protein (107 aa).

In terms of domain architecture, HTH cro/C1-type spans 13-68 (LQEEFLEPLSLKISDLAQILDVHRNTASNIVNNSSRITLEMAVKLAKVFDTTPEFW). The segment at residues 24–43 (KISDLAQILDVHRNTASNIV) is a DNA-binding region (H-T-H motif).

This sequence belongs to the VapA/VapI family.

This is an uncharacterized protein from Haemophilus influenzae (strain ATCC 51907 / DSM 11121 / KW20 / Rd).